A 361-amino-acid chain; its full sequence is Peptidyl-prolyl cis-trans isomerase CYP40 (361 aa).

The PPIase cyclophilin-type domain maps to 7–172; that stretch reads FMDISIGGEL…QDVVIHDCGE (166 aa). TPR repeat units follow at residues 212–245 and 298–331; these read VDFVKAHGNEHFKKQDYKMALRKYRKALRYLDIC and VKALFRQGQAYMALNNVDAAAESLEKALQFEPND.

This sequence belongs to the cyclophilin-type PPIase family. As to expression, expressed at low levels in seedlings, roots, shoots, leaves, stems, inflorescences, flowers and siliques, with highest levels dividing tissues.

The protein resides in the cytoplasm. The catalysed reaction is [protein]-peptidylproline (omega=180) = [protein]-peptidylproline (omega=0). Binds cyclosporin A (CsA). CsA mediates some of its effects via an inhibitory action on PPIase. Functionally, PPIases accelerate the folding of proteins. It catalyzes the cis-trans isomerization of proline imidic peptide bonds in oligopeptides. Involved in promoting the expression of the juvenile phase of vegetative development, and, to a lower extent, in regulating the positioning of floral buds, floral morphogenesis and the expression of HSPs. Collaboratively with RBL and ULT1, influences floral meristem (FM) determinacy in an AGAMOUS and SUPERMAN-dependent manner, thus contributing to the floral developmental homeostasis. The polypeptide is Peptidyl-prolyl cis-trans isomerase CYP40 (Arabidopsis thaliana (Mouse-ear cress)).